The sequence spans 276 residues: ADP-dependent (S)-NAD(P)H-hydrate dehydratase (276 aa).

Residues 7–275 enclose the YjeF C-terminal domain; that stretch reads TEEHVRATLP…DILPRVWKRF (269 aa). (6S)-NADPHX contacts are provided by A42, G104, and H149. AMP-binding positions include 186–190 and G215; that span reads KGNQT. D216 lines the (6S)-NADPHX pocket.

This sequence belongs to the NnrD/CARKD family. As to quaternary structure, homotetramer. It depends on Mg(2+) as a cofactor.

The enzyme catalyses (6S)-NADHX + ADP = AMP + phosphate + NADH + H(+). It catalyses the reaction (6S)-NADPHX + ADP = AMP + phosphate + NADPH + H(+). In terms of biological role, catalyzes the dehydration of the S-form of NAD(P)HX at the expense of ADP, which is converted to AMP. Together with NAD(P)HX epimerase, which catalyzes the epimerization of the S- and R-forms, the enzyme allows the repair of both epimers of NAD(P)HX, a damaged form of NAD(P)H that is a result of enzymatic or heat-dependent hydration. The chain is ADP-dependent (S)-NAD(P)H-hydrate dehydratase from Bacillus subtilis (strain 168).